The chain runs to 170 residues: Myosin regulatory light chain 2, skeletal muscle isoform type 1 (170 aa).

At A2 the chain carries N,N,N-trimethylalanine. Phosphoserine occurs at positions 16 and 17. A phosphothreonine mark is found at T26 and T36. In terms of domain architecture, EF-hand 1 spans 26–61; that stretch reads TQIQEFKEAFTVIDQNRDGIIDKEDLRDTFAAMGRL. 4 residues coordinate Ca(2+): D39, N41, D43, and D50. The residue at position 76 (S76) is a Phosphoserine. EF-hand domains lie at 96-131 and 132-167; these read DPED…QCDR and FSQE…GDAK. T102 carries the phosphothreonine modification.

Myosin is a hexamer of 2 heavy chains and 4 light chains.

This Oryctolagus cuniculus (Rabbit) protein is Myosin regulatory light chain 2, skeletal muscle isoform type 1.